The primary structure comprises 460 residues: Mogroside I-E synthase (460 aa).

The active-site Proton acceptor is the histidine 25. Residue aspartate 114 is the Charge relay of the active site. Serine 286, cysteine 339, glutamine 341, tryptophan 359, asparagine 360, serine 361, glutamate 364, aspartate 380, and glutamine 381 together coordinate UDP-alpha-D-glucose.

This sequence belongs to the UDP-glycosyltransferase family. In terms of tissue distribution, highly expressed in young fruits 15 days after anthesis (15-DAA).

The catalysed reaction is mogrol + UDP-alpha-D-glucose = mogroside IE + UDP + H(+). It catalyses the reaction mogroside I-A1 + UDP-alpha-D-glucose = mogroside IIE + UDP + H(+). The enzyme catalyses mogroside II-A1 + UDP-alpha-D-glucose = mogroside IIIX + UDP + H(+). It carries out the reaction mogroside II-A + UDP-alpha-D-glucose = mogroside III + UDP + H(+). The catalysed reaction is mogroside III-A1 + UDP-alpha-D-glucose = siamenoside I + UDP + H(+). The protein operates within secondary metabolite biosynthesis; terpenoid biosynthesis. Functionally, UDP-glycosyltransferase involved in the biosynthesis of cucurbitacin and mogroside tetracyclic triterpene natural products (e.g. siamenoside I and mogrosides IV, V and VI). Cucurbitacins have cytotoxic properties and exhibit deterrent taste as a defense barrier against herbivores. Mogrosides are nonsugar highly oxygenated compounds used as high-intensity zero-calorie sweeteners; they also possess pharmacological properties such as regulating immunity, lowering blood sugar and lipid levels, protecting the liver, and acting as antioxidants and antitumor agents. Catalyzes the C3 primary glucosylation of mogrol, mogroside I-A1, mogroside II-A1, mogroside II-A and mogroside III-A1. This Siraitia grosvenorii (Monk's fruit) protein is Mogroside I-E synthase.